The primary structure comprises 361 residues: Peptide chain release factor 1 (361 aa).

At Q236 the chain carries N5-methylglutamine. A compositionally biased stretch (basic and acidic residues) spans 285-309 (TAKDSARAADRKAQVGSGDRSERIR). The segment at 285 to 313 (TAKDSARAADRKAQVGSGDRSERIRTYNF) is disordered.

Belongs to the prokaryotic/mitochondrial release factor family. In terms of processing, methylated by PrmC. Methylation increases the termination efficiency of RF1.

It localises to the cytoplasm. Functionally, peptide chain release factor 1 directs the termination of translation in response to the peptide chain termination codons UAG and UAA. This chain is Peptide chain release factor 1, found in Methylorubrum populi (strain ATCC BAA-705 / NCIMB 13946 / BJ001) (Methylobacterium populi).